The sequence spans 1463 residues: Alpha-agarase (1463 aa).

An N-terminal signal peptide occupies residues 1–27 (MITSSKKIVSAMLSTSLWIGVASAAYA). The propeptide occupies 28–684 (ETTNVEAEGY…PSTLSESIFT (657 aa)). Disordered stretches follow at residues 166 to 191 (VTPE…PGTP) and 512 to 549 (TDDI…PQPG). Over residues 518–536 (CANTPSGETANATGCSSSQ) the composition is skewed to polar residues. Residues 534-677 (SSQEGGGTDP…GGTNFVHPST (144 aa)) enclose the PA14 domain. The CBM6 domain maps to 701-832 (IIVELESFVF…QWSGDRVRFT (132 aa)).

The protein belongs to the glycosyl hydrolase 96 family. As to quaternary structure, monomer. The cofactor is Ca(2+).

The catalysed reaction is Endohydrolysis of 1,3-alpha-L-galactosidic linkages in agarose, yielding agarotetraose as the major product.. Alpha-agarase. Hydrolyzes agarose, agarohexaose, neoagarohexaose and porphyran. Hydrolysis of porphyran by this enzyme improves its antioxidant activity. Does not hydrolyze kappa-carrageenan, iota-carrageenen or lambda-carrageenan. The chain is Alpha-agarase from Thalassotalea agarivorans (Thalassomonas agarivorans).